We begin with the raw amino-acid sequence, 695 residues long: Polyribonucleotide nucleotidyltransferase (695 aa).

Asp486 and Asp492 together coordinate Mg(2+). In terms of domain architecture, KH spans 553–612 (PRIETMQINTSKIATVIGPGGKQIRQIIERSGAQVDINDDGVINIAASTQESINKAKELI). The S1 motif domain occupies 622–690 (GKVYNGRVTS…EKGQLKLSHK (69 aa)).

Belongs to the polyribonucleotide nucleotidyltransferase family. It depends on Mg(2+) as a cofactor.

It localises to the cytoplasm. The enzyme catalyses RNA(n+1) + phosphate = RNA(n) + a ribonucleoside 5'-diphosphate. In terms of biological role, involved in mRNA degradation. Catalyzes the phosphorolysis of single-stranded polyribonucleotides processively in the 3'- to 5'-direction. The chain is Polyribonucleotide nucleotidyltransferase from Chlamydia trachomatis serovar A (strain ATCC VR-571B / DSM 19440 / HAR-13).